The chain runs to 338 residues: Ketol-acid reductoisomerase (NADP(+)) (338 aa).

The region spanning 1 to 181 (MKVYYDKDCD…GGGRTGIIET (181 aa)) is the KARI N-terminal Rossmann domain. NADP(+) is bound by residues 24–27 (YGSQ), Arg47, Ser50, Thr52, and 82–85 (DEFQ). His107 is an active-site residue. Gly133 lines the NADP(+) pocket. A KARI C-terminal knotted domain is found at 182–327 (TFKDETETDL…EQLRAMMPWI (146 aa)). The Mg(2+) site is built by Asp190, Glu194, Glu226, and Glu230. Ser251 contributes to the substrate binding site.

This sequence belongs to the ketol-acid reductoisomerase family. Mg(2+) serves as cofactor.

The enzyme catalyses (2R)-2,3-dihydroxy-3-methylbutanoate + NADP(+) = (2S)-2-acetolactate + NADPH + H(+). It carries out the reaction (2R,3R)-2,3-dihydroxy-3-methylpentanoate + NADP(+) = (S)-2-ethyl-2-hydroxy-3-oxobutanoate + NADPH + H(+). The protein operates within amino-acid biosynthesis; L-isoleucine biosynthesis; L-isoleucine from 2-oxobutanoate: step 2/4. It participates in amino-acid biosynthesis; L-valine biosynthesis; L-valine from pyruvate: step 2/4. Functionally, involved in the biosynthesis of branched-chain amino acids (BCAA). Catalyzes an alkyl-migration followed by a ketol-acid reduction of (S)-2-acetolactate (S2AL) to yield (R)-2,3-dihydroxy-isovalerate. In the isomerase reaction, S2AL is rearranged via a Mg-dependent methyl migration to produce 3-hydroxy-3-methyl-2-ketobutyrate (HMKB). In the reductase reaction, this 2-ketoacid undergoes a metal-dependent reduction by NADPH to yield (R)-2,3-dihydroxy-isovalerate. This chain is Ketol-acid reductoisomerase (NADP(+)), found in Ectopseudomonas mendocina (strain ymp) (Pseudomonas mendocina).